Consider the following 1245-residue polypeptide: Structural polyprotein (1245 aa).

Residues 1 to 106 (MNRGFFNMLG…KPKPGKRQRM (106 aa)) are disordered. Positions 37–70 (GLASQIQQLTTAVSALVIGQATRPQPPRPRPPPR) are host transcription inhibition. Residues 38-49 (LASQIQQLTTAV) are compositionally biased toward polar residues. The Nuclear localization signal motif lies at 63-100 (PRPRPPPRQKKQAPKQPPKPKKPKTQEKKKKQPAKPKP). Over residues 67 to 106 (PPPRQKKQAPKQPPKPKKPKTQEKKKKQPAKPKPGKRQRM) the composition is skewed to basic residues. A binding to the viral RNA region spans residues 86–115 (KTQEKKKKQPAKPKPGKRQRMALKLEADRL). The tract at residues 100 to 114 (PGKRQRMALKLEADR) is ribosome-binding. One can recognise a Peptidase S3 domain in the interval 114-264 (RLFDVKNEDG…KTTPEGTEEW (151 aa)). His-141 acts as the Charge relay system in catalysis. The short motif at 146-156 (IDHPVLSKLKF) is the Nuclear export signal element. The tract at residues 157 to 162 (TKSSAY) is interaction with spike glycoprotein E2. The Charge relay system role is filled by Asp-163. The segment at 185–195 (PEGFYNWHHGA) is dimerization of the capsid protein. Catalysis depends on Ser-215, which acts as the Charge relay system. The segment at 221-225 (DNSGR) is dimerization of the capsid protein. Positions 249-253 (SKGKT) are interaction with spike glycoprotein E2. The interval 265–279 (SAAPLVTAMCLLGNV) is functions as an uncleaved signal peptide for the precursor of protein E3/E2. N-linked (GlcNAc...) asparagine; by host glycosylation occurs at Asn-278. 4 disulfide bridges follow: Cys-283–Cys-289, Cys-480–Cys-594, Cys-529–Cys-554, and Cys-531–Cys-548. Residues 329 to 690 (SVIDDFTLTS…HEIVQHYYHR (362 aa)) are Extracellular-facing. Asn-524 carries N-linked (GlcNAc...) asparagine; by host glycosylation. N-linked (GlcNAc...) asparagine; by host glycosylation is present at Asn-646. A coiled-coil region spans residues 682–730 (EIVQHYYHRHPVYTILAVASATVAMMIGVTVAVLCACKARRECLTPYAL). A helical membrane pass occupies residues 691–718 (HPVYTILAVASATVAMMIGVTVAVLCAC). The interaction with the capsid protein stretch occupies residues 719 to 723 (KARRE). Residues 719 to 751 (KARRECLTPYALAPNAVIPTSLALLCCVRSANA) are Cytoplasmic-facing. Residues Cys-724, Cys-744, and Cys-745 are each lipidated (S-palmitoyl cysteine; by host). Cys-724 and Cys-745 are joined by a disulfide. Topologically, residues 752 to 763 (ETFTETMSYLWS) are extracellular. Residues 764-784 (NSQPFFWVQLCIPLAAFIVLM) traverse the membrane as a helical segment. Residue Arg-785 is a topological domain, cytoplasmic. Residues 786 to 806 (CCSCCLPFLVVAGAYLAKVDA) traverse the membrane as a helical segment. The Extracellular segment spans residues 807–1214 (YEHATTVPNV…QAAISKTSWS (408 aa)). Disulfide bonds link Cys-855/Cys-920, Cys-868/Cys-900, Cys-869/Cys-902, and Cys-874/Cys-884. Residues 890–907 (VYPFMWGGAQCFCDSENS) form an E1 fusion peptide loop region. N-linked (GlcNAc...) asparagine; by host glycans are attached at residues Asn-945 and Asn-1051. Intrachain disulfides connect Cys-1065-Cys-1077, Cys-1107-Cys-1182, Cys-1112-Cys-1186, and Cys-1134-Cys-1176. A coiled-coil region spans residues 1196–1245 (TPHKNDQEFQAAISKTSWSWLFALFGGASSLLIIGLMIFACSMMLTSTRR). A helical transmembrane segment spans residues 1215-1239 (WLFALFGGASSLLIIGLMIFACSMM). Over 1240–1245 (LTSTRR) the chain is Cytoplasmic.

The protein belongs to the alphavirus structural polyprotein family. In terms of assembly, homomultimer. Interacts with host karyopherin KPNA4; this interaction allows the nuclear import of the viral capsid protein. Interacts with spike glycoprotein E2. Interacts with host IRAK1; the interaction leads to inhibition of IRAK1-dependent signaling. The precursor of protein E3/E2 and E1 form a heterodimer shortly after synthesis. As to quaternary structure, the precursor of protein E3/E2 and E1 form a heterodimer shortly after synthesis. Processing of the precursor of protein E3/E2 into E2 and E3 results in a heterodimer of the spike glycoproteins E2 and E1. Spike at virion surface are constituted of a trimer of E2-E1 heterodimers. After target cell attachment and endocytosis, E1 change conformation to form homotrimers. E2-E1 heterodimers interact with host VLDLR or LRP8/APOER2 to mediate viral entry. Interacts with 6K protein. In terms of assembly, interacts with spike glycoprotein E1. Processing of the precursor of protein E3/E2 into E2 and E3 results in a heterodimer of the spike glycoproteins E2 and E1. Spike at virion surface are constituted of a trimer of E2-E1 heterodimers. E2-E1 heterodimers interact with host VLDLR or LRP8/APOER2 to mediate viral entry. Interacts with 6K protein. Interacts with the capsid protein. Oligomer. Interacts with spike glycoprotein E1. Interacts with spike glycoprotein E2. Specific enzymatic cleavages in vivo yield mature proteins. Capsid protein is auto-cleaved during polyprotein translation, unmasking a signal peptide at the N-terminus of the precursor of E3/E2. The remaining polyprotein is then targeted to the host endoplasmic reticulum, where host signal peptidase cleaves it into pE2, 6K and E1 proteins. pE2 is further processed to mature E3 and E2 by host furin in trans-Golgi vesicle. In terms of processing, palmitoylated via thioester bonds. These palmitoylations may induce disruption of the C-terminus transmembrane. This would result in the reorientation of E2 C-terminus from lumenal to cytoplasmic side. Post-translationally, N-glycosylated. Palmitoylated via thioester bonds.

The protein localises to the virion. The protein resides in the host cytoplasm. Its subcellular location is the host cell membrane. It is found in the host nucleus. It localises to the virion membrane. The protein localises to the host Golgi apparatus. The protein resides in the host trans-Golgi network. Its subcellular location is the host endoplasmic reticulum. It catalyses the reaction Autocatalytic release of the core protein from the N-terminus of the togavirus structural polyprotein by hydrolysis of a -Trp-|-Ser- bond.. The channel activity is blocked by 5-N, N-Hexamethylene amiloride. Forms an icosahedral capsid with a T=4 symmetry composed of 240 copies of the capsid protein surrounded by a lipid membrane through which penetrate 80 spikes composed of trimers of E1-E2 heterodimers. The capsid protein binds to the viral RNA genome at a site adjacent to a ribosome binding site for viral genome translation following genome release. Possesses a protease activity that results in its autocatalytic cleavage from the nascent structural protein. Following its self-cleavage, the capsid protein transiently associates with ribosomes, and within several minutes the protein binds to viral RNA and rapidly assembles into icosahedric core particles. The resulting nucleocapsid eventually associates with the cytoplasmic domain of the spike glycoprotein E2 at the cell membrane, leading to budding and formation of mature virions. In case of infection, new virions attach to target cells and after clathrin-mediated endocytosis their membrane fuses with the host endosomal membrane. This leads to the release of the nucleocapsid into the cytoplasm, followed by an uncoating event necessary for the genomic RNA to become accessible. The uncoating might be triggered by the interaction of capsid proteins with ribosomes. Binding of ribosomes would release the genomic RNA since the same region is genomic RNA-binding and ribosome-binding. Specifically inhibits interleukin-1 receptor-associated kinase 1/IRAK1-dependent signaling during viral entry, representing a means by which the alphaviruses may evade innate immune detection and activation prior to viral gene expression. Functionally, provides the signal sequence for the translocation of the precursor of protein E3/E2 to the host endoplasmic reticulum. Furin-cleaved E3 remains associated with spike glycoprotein E1 and mediates pH protection of the latter during the transport via the secretory pathway. After virion release from the host cell, the assembly protein E3 is gradually released in the extracellular space. Its function is as follows. Plays a role in viral attachment to target host cell, by binding to the cell receptors VLDLR or LRP8/APOER2. Synthesized as a pE2 precursor which is processed by furin at the cell membrane just before virion budding, giving rise to E2-E1 heterodimer. The pE2-E1 heterodimer is stable, whereas E2-E1 is unstable and dissociate at low pH. pE2 is processed at the last step, presumably to avoid E1 fusion activation before its final export to cell surface. E2 C-terminus contains a transitory transmembrane that would be disrupted by palmitoylation, resulting in reorientation of the C-terminal tail from lumenal to cytoplasmic side. This step is critical since E2 C-terminus is involved in budding by interacting with capsid proteins. This release of E2 C-terminus in cytoplasm occurs lately in protein export, and precludes premature assembly of particles at the endoplasmic reticulum membrane. In terms of biological role, acts as a viroporin that participates in virus glycoprotein processing and transport to the plasma membrane, cell permeabilization and budding of viral particles. Disrupts the calcium homeostasis of the cell, probably at the endoplasmic reticulum level resulting in the increased levels of cytoplasmic calcium. Because of its lipophilic properties, the 6K protein is postulated to influence the selection of lipids that interact with the transmembrane domains of the glycoproteins, which, in turn, affects the deformability of the bilayer required for the extreme curvature that occurs as budding proceeds. Present in low amount in virions, about 3% compared to viral glycoproteins. Class II viral fusion protein. Fusion activity is inactive as long as E1 is bound to E2 in mature virion. After virus attachment to target cell via host VLDLR or LRP8/APOER2 and endocytosis, acidification of the endosome induces dissociation of E1/E2 heterodimer and concomitant trimerization of the E1 subunits. This E1 trimer is fusion active, and promotes release of viral nucleocapsid in cytoplasm after endosome and viral membrane fusion. Efficient fusion requires the presence of cholesterol and sphingolipid in the target membrane. This chain is Structural polyprotein, found in Acrocephalus scirpaceus (Eurasian reed-warbler).